The chain runs to 271 residues: Thiazole synthase (271 aa).

The Schiff-base intermediate with DXP role is filled by K108. 1-deoxy-D-xylulose 5-phosphate-binding positions include G169, 195–196 (AG), and 217–218 (NS).

It belongs to the ThiG family. In terms of assembly, homotetramer. Forms heterodimers with either ThiH or ThiS.

The protein localises to the cytoplasm. It catalyses the reaction [ThiS sulfur-carrier protein]-C-terminal-Gly-aminoethanethioate + 2-iminoacetate + 1-deoxy-D-xylulose 5-phosphate = [ThiS sulfur-carrier protein]-C-terminal Gly-Gly + 2-[(2R,5Z)-2-carboxy-4-methylthiazol-5(2H)-ylidene]ethyl phosphate + 2 H2O + H(+). It functions in the pathway cofactor biosynthesis; thiamine diphosphate biosynthesis. Its function is as follows. Catalyzes the rearrangement of 1-deoxy-D-xylulose 5-phosphate (DXP) to produce the thiazole phosphate moiety of thiamine. Sulfur is provided by the thiocarboxylate moiety of the carrier protein ThiS. In vitro, sulfur can be provided by H(2)S. This is Thiazole synthase from Prochlorococcus marinus (strain SARG / CCMP1375 / SS120).